The sequence spans 317 residues: Putative 2-hydroxyacid dehydrogenase SA2098 (317 aa).

NAD(+) contacts are provided by residues 155–156 (EI), 234–236 (ASR), and aspartate 260. The active site involves arginine 236. Glutamate 265 is an active-site residue. Histidine 283 serves as the catalytic Proton donor. 283-286 (HIGN) is a binding site for NAD(+).

The protein belongs to the D-isomer specific 2-hydroxyacid dehydrogenase family.

The chain is Putative 2-hydroxyacid dehydrogenase SA2098 from Staphylococcus aureus (strain N315).